A 123-amino-acid chain; its full sequence is Amoebiasin-2 (123 aa).

The first 16 residues, 1-16, serve as a signal peptide directing secretion; sequence MKQFIFFALLCTSTYA. A BC loop motif is present at residues 45–50; that stretch reads NPSTGY. A DE loop motif is present at residues 71–81; sequence EPHPSGMVGFP. Positions 105-114 match the FG loop motif; it reads PWEKGKEPLR.

The protein belongs to the protease inhibitor I42 family. In terms of assembly, monomer. May form homodimer. Interacts with cysteine protease CP2. Interacts with cysteine protease CP5.

It localises to the cytoplasmic vesicle. The protein localises to the lysosome. The protein resides in the phagosome. Cysteine protease inhibitor. Inhibits cysteine proteases CP1, CP2 and to a lesser extent CP5. This is Amoebiasin-2 from Entamoeba histolytica (strain ATCC 30459 / HM-1:IMSS / ABRM).